A 306-amino-acid chain; its full sequence is Curved DNA-binding protein (306 aa).

The J domain occupies 5–69 (DYYAIMGVKP…QRRAEYDQLW (65 aa)).

It is found in the cytoplasm. The protein localises to the nucleoid. Functionally, DNA-binding protein that preferentially recognizes a curved DNA sequence. It is probably a functional analog of DnaJ; displays overlapping activities with DnaJ, but functions under different conditions, probably acting as a molecular chaperone in an adaptive response to environmental stresses other than heat shock. Lacks autonomous chaperone activity; binds native substrates and targets them for recognition by DnaK. Its activity is inhibited by the binding of CbpM. This is Curved DNA-binding protein from Citrobacter koseri (strain ATCC BAA-895 / CDC 4225-83 / SGSC4696).